Reading from the N-terminus, the 116-residue chain is Iron-sulfur cluster insertion protein ErpA (116 aa).

Positions 44, 108, and 110 each coordinate iron-sulfur cluster.

Belongs to the HesB/IscA family. As to quaternary structure, homodimer. It depends on iron-sulfur cluster as a cofactor.

Its function is as follows. Required for insertion of 4Fe-4S clusters for at least IspG. The protein is Iron-sulfur cluster insertion protein ErpA of Aeromonas salmonicida (strain A449).